Reading from the N-terminus, the 339-residue chain is Adenylosuccinate synthetase (339 aa).

GTP contacts are provided by residues Gly12–Ser18 and Gly42–Ser44. Asp13 functions as the Proton acceptor in the catalytic mechanism. The Mg(2+) site is built by Asp13 and Gly42. IMP is bound by residues Asp13–Lys16, Asn40–His43, Thr127, Arg141, Gln179, Thr194, and Arg256. The Proton donor role is filled by His43. Position 252–258 (Thr252–Arg258) interacts with substrate. Residues Arg258, Met284–Asp286, and Lys324–Gly326 each bind GTP.

The protein belongs to the adenylosuccinate synthetase family. Homodimer. It depends on Mg(2+) as a cofactor.

The protein localises to the cytoplasm. The enzyme catalyses IMP + L-aspartate + GTP = N(6)-(1,2-dicarboxyethyl)-AMP + GDP + phosphate + 2 H(+). It functions in the pathway purine metabolism; AMP biosynthesis via de novo pathway; AMP from IMP: step 1/2. Plays an important role in the de novo pathway of purine nucleotide biosynthesis. Catalyzes the first committed step in the biosynthesis of AMP from IMP. The protein is Adenylosuccinate synthetase of Thermococcus sibiricus (strain DSM 12597 / MM 739).